Reading from the N-terminus, the 399-residue chain is Acetate kinase (399 aa).

Asn-10 is a Mg(2+) binding site. Lys-17 is a binding site for ATP. Arg-91 contributes to the substrate binding site. The Proton donor/acceptor role is filled by Asp-148. ATP is bound by residues 208-212, 283-285, and 331-335; these read HLGNG, DCR, and GIGEN. Glu-385 is a binding site for Mg(2+).

Belongs to the acetokinase family. Homodimer. It depends on Mg(2+) as a cofactor. Requires Mn(2+) as cofactor.

The protein localises to the cytoplasm. It carries out the reaction acetate + ATP = acetyl phosphate + ADP. The protein operates within metabolic intermediate biosynthesis; acetyl-CoA biosynthesis; acetyl-CoA from acetate: step 1/2. In terms of biological role, catalyzes the formation of acetyl phosphate from acetate and ATP. Can also catalyze the reverse reaction. In Shewanella oneidensis (strain ATCC 700550 / JCM 31522 / CIP 106686 / LMG 19005 / NCIMB 14063 / MR-1), this protein is Acetate kinase.